The chain runs to 467 residues: Dimethylamine methyltransferase MtbB3 (467 aa).

O356 is a non-standard amino acid (pyrrolysine).

Belongs to the dimethylamine methyltransferase family.

It carries out the reaction Co(I)-[dimethylamine-specific corrinoid protein] + dimethylamine + H(+) = methyl-Co(III)-[dimethylamine-specific corrinoid protein] + methylamine. It participates in one-carbon metabolism; methanogenesis from dimethylamine. Functionally, catalyzes the transfer of a methyl group from dimethylamine to the corrinoid cofactor of MtbC. The polypeptide is Dimethylamine methyltransferase MtbB3 (mtbB3) (Methanosarcina mazei (strain ATCC BAA-159 / DSM 3647 / Goe1 / Go1 / JCM 11833 / OCM 88) (Methanosarcina frisia)).